The chain runs to 339 residues: Biotin synthase (339 aa).

The Radical SAM core domain occupies 55-282; sequence NAVQLSTLLS…KAVVRLSAGR (228 aa). Residues Cys70, Cys74, and Cys77 each contribute to the [4Fe-4S] cluster site. 4 residues coordinate [2Fe-2S] cluster: Cys114, Cys145, Cys205, and Arg277.

Belongs to the radical SAM superfamily. Biotin synthase family. In terms of assembly, homodimer. Requires [4Fe-4S] cluster as cofactor. The cofactor is [2Fe-2S] cluster.

It carries out the reaction (4R,5S)-dethiobiotin + (sulfur carrier)-SH + 2 reduced [2Fe-2S]-[ferredoxin] + 2 S-adenosyl-L-methionine = (sulfur carrier)-H + biotin + 2 5'-deoxyadenosine + 2 L-methionine + 2 oxidized [2Fe-2S]-[ferredoxin]. Its pathway is cofactor biosynthesis; biotin biosynthesis; biotin from 7,8-diaminononanoate: step 2/2. In terms of biological role, catalyzes the conversion of dethiobiotin (DTB) to biotin by the insertion of a sulfur atom into dethiobiotin via a radical-based mechanism. In Burkholderia cenocepacia (strain ATCC BAA-245 / DSM 16553 / LMG 16656 / NCTC 13227 / J2315 / CF5610) (Burkholderia cepacia (strain J2315)), this protein is Biotin synthase.